Reading from the N-terminus, the 197-residue chain is MADSMQLAGIVLAGGESRRMGRDKATLPGPRGAATLLEYVVGVLTQRCDPIFVMAAPGQPLPEVSARIIRDEIRGQGPLPATGRGLRAAAEAGARYAFVCAVDMPLLSPELIDDLVHLATETNAEVVLPWDGRSHYLASLYRTDLAERIDRLVAGGARSMRALIDASDAQQIVLPESRFLANVNTEADLRALAQARA.

Residues 12-14 (LAG), Lys-24, Asp-71, and Asp-103 each bind GTP. Asp-103 is a binding site for Mg(2+).

It belongs to the MobA family. Requires Mg(2+) as cofactor.

It localises to the cytoplasm. It catalyses the reaction Mo-molybdopterin + GTP + H(+) = Mo-molybdopterin guanine dinucleotide + diphosphate. Transfers a GMP moiety from GTP to Mo-molybdopterin (Mo-MPT) cofactor (Moco or molybdenum cofactor) to form Mo-molybdopterin guanine dinucleotide (Mo-MGD) cofactor. The chain is Probable molybdenum cofactor guanylyltransferase from Mycobacterium avium (strain 104).